The sequence spans 122 residues: Fluoride-specific ion channel FluC 2 (122 aa).

The next 4 membrane-spanning stretches (helical) occupy residues 3–23 (ITAI…RMFI), 38–58 (TSIV…LNLT), 62–82 (LLLL…SFIY), and 93–113 (FMHL…CFYL). Na(+)-binding residues include glycine 72 and serine 75.

This sequence belongs to the fluoride channel Fluc/FEX (TC 1.A.43) family.

Its subcellular location is the cell inner membrane. It carries out the reaction fluoride(in) = fluoride(out). Na(+) is not transported, but it plays an essential structural role and its presence is essential for fluoride channel function. Fluoride-specific ion channel. Important for reducing fluoride concentration in the cell, thus reducing its toxicity. The polypeptide is Fluoride-specific ion channel FluC 2 (Prochlorococcus marinus (strain MIT 9312)).